The primary structure comprises 337 residues: Ornithine carbamoyltransferase (337 aa).

Carbamoyl phosphate is bound by residues 57-60, Gln-84, Arg-108, and 135-138; these read STRT and HPTQ. L-ornithine contacts are provided by residues Asn-167, Asp-231, and 235-236; that span reads SM. Residues 272 to 273 and Arg-317 contribute to the carbamoyl phosphate site; that span reads CL.

It belongs to the aspartate/ornithine carbamoyltransferase superfamily. OTCase family.

Its subcellular location is the cytoplasm. The enzyme catalyses carbamoyl phosphate + L-ornithine = L-citrulline + phosphate + H(+). The protein operates within amino-acid degradation; L-arginine degradation via ADI pathway; carbamoyl phosphate from L-arginine: step 2/2. Functionally, reversibly catalyzes the transfer of the carbamoyl group from carbamoyl phosphate (CP) to the N(epsilon) atom of ornithine (ORN) to produce L-citrulline. This is Ornithine carbamoyltransferase from Streptococcus uberis (strain ATCC BAA-854 / 0140J).